A 154-amino-acid polypeptide reads, in one-letter code: 6,7-dimethyl-8-ribityllumazine synthase (154 aa).

5-amino-6-(D-ribitylamino)uracil-binding positions include phenylalanine 21, 55 to 57 (AFE), and 79 to 81 (CVI). 84–85 (AT) provides a ligand contact to (2S)-2-hydroxy-3-oxobutyl phosphate. Histidine 87 acts as the Proton donor in catalysis. Phenylalanine 112 serves as a coordination point for 5-amino-6-(D-ribitylamino)uracil. Arginine 126 provides a ligand contact to (2S)-2-hydroxy-3-oxobutyl phosphate.

The protein belongs to the DMRL synthase family. In terms of assembly, forms an icosahedral capsid composed of 60 subunits, arranged as a dodecamer of pentamers.

The enzyme catalyses (2S)-2-hydroxy-3-oxobutyl phosphate + 5-amino-6-(D-ribitylamino)uracil = 6,7-dimethyl-8-(1-D-ribityl)lumazine + phosphate + 2 H2O + H(+). It functions in the pathway cofactor biosynthesis; riboflavin biosynthesis; riboflavin from 2-hydroxy-3-oxobutyl phosphate and 5-amino-6-(D-ribitylamino)uracil: step 1/2. In terms of biological role, catalyzes the formation of 6,7-dimethyl-8-ribityllumazine by condensation of 5-amino-6-(D-ribitylamino)uracil with 3,4-dihydroxy-2-butanone 4-phosphate. This is the penultimate step in the biosynthesis of riboflavin. The protein is 6,7-dimethyl-8-ribityllumazine synthase of Staphylococcus aureus (strain Mu50 / ATCC 700699).